The chain runs to 218 residues: CTD kinase subunit gamma (218 aa).

Residues 2 to 138 (DPFEGRMTFL…DAMATVEAHE (137 aa)) form the CID domain. A disordered region spans residues 137–157 (HEQASKSGDTSTSGAISKNDI). Positions 141 to 152 (SKSGDTSTSGAI) are enriched in polar residues.

It belongs to the CTK3 family. In terms of assembly, CTDK-I consists of three subunits, ctk1/lsk1, ctk2/lsc1 and ctk3 (also called alpha, beta and gamma).

The protein resides in the cytoplasm. It localises to the nucleus. In terms of biological role, subunit of the CTDK-I complex, which hyperphosphorylates the C-terminal heptapeptide repeat domain (CTD) of the largest RNA polymerase II subunit. As part of the CTDK-I complex, involved in RNA polymerase II transcriptional elongation and pre-mRNA 3'-end processing. Together with ctk2, required for ctk1/lsk1 CTD kinase activation. The protein is CTD kinase subunit gamma of Schizosaccharomyces pombe (strain 972 / ATCC 24843) (Fission yeast).